Here is a 567-residue protein sequence, read N- to C-terminus: Frizzled-7 (567 aa).

Positions 1 to 31 (MRPAAGEAGAGLRWLGLAALLAALLGTPCAA) are cleaved as a signal peptide. At 32-250 (AHHEDKAISV…EAEVRFARLW (219 aa)) the chain is on the extracellular side. Residues 42–161 (PDHGFCQPIS…HGAGEICVGQ (120 aa)) enclose the FZ domain. 5 disulfides stabilise this stretch: Cys-47-Cys-108, Cys-55-Cys-101, Cys-92-Cys-129, Cys-118-Cys-158, and Cys-122-Cys-146. N-linked (GlcNAc...) asparagine glycosylation occurs at Asn-61. N-linked (GlcNAc...) asparagine glycosylation is present at Asn-162. The helical transmembrane segment at 251-271 (VGVWSVLCCASTLFTVLTYLV) threads the bilayer. At 272 to 282 (DMRRFSYPERP) the chain is on the cytoplasmic side. A helical membrane pass occupies residues 283 to 303 (IIFLSGCYFMVAVAYAAGFLL). Residues 304–330 (EERVVCLERFSEDGYRTVAQGTKKEGC) lie on the Extracellular side of the membrane. A helical membrane pass occupies residues 331–351 (TILFMILYFFGMASSIWWVIL). Over 352 to 373 (SLTWFLAAGMKWGHEAIEANSQ) the chain is Cytoplasmic. Residues 374–394 (YFHLAAWAVPAVKTITILAMG) traverse the membrane as a helical segment. Residues 395–417 (QVDGDVLSGVCYVGIYSVDSLRG) are Extracellular-facing. A helical transmembrane segment spans residues 418–438 (FVLAPLFVYLFIGTSFLLAGF). Over 439-464 (VSLFRIRTIMKHDGTKTEKLEKLMVR) the chain is Cytoplasmic. Residues 465–485 (IGVFSVLYTVPATIVVACYFY) traverse the membrane as a helical segment. Residues 486-521 (EQAFRSTWEKTWLLQTCKTYAVPCPSHFAPMSPDFT) are Extracellular-facing. Residues 522 to 542 (VFMIKYLMTMIVGITTGFWIW) form a helical membrane-spanning segment. Residues 543–567 (SGKTLQSWRRFYHRLSTGSKGETAV) are Cytoplasmic-facing. A Lys-Thr-X-X-X-Trp motif, mediates interaction with the PDZ domain of Dvl family members motif is present at residues 545–550 (KTLQSW). A PDZ-binding motif is present at residues 565–567 (TAV).

This sequence belongs to the G-protein coupled receptor Fz/Smo family. Expressed broadly in cranial ectoderm. Also expressed in the developing somites and in other cranial placodes, including the olfactory, lens, otic placodes (lateral half of the vesicle) and epibranchial placodes. Low level of expression in all the mesoderm derivatives in the limb buds.

The protein localises to the cell membrane. Its subcellular location is the endosome membrane. Its function is as follows. Receptor for Wnt proteins. Most of frizzled receptors are coupled to the beta-catenin canonical signaling pathway, which leads to the activation of disheveled proteins, inhibition of GSK-3 kinase, nuclear accumulation of beta-catenin and activation of Wnt target genes. A second signaling pathway involving PKC and calcium fluxes has been seen for some family members, but it is not yet clear if it represents a distinct pathway or if it can be integrated in the canonical pathway, as PKC seems to be required for Wnt-mediated inactivation of GSK-3 kinase. Both pathways seem to involve interactions with G-proteins. May be involved in transduction and intercellular transmission of polarity information during tissue morphogenesis and/or in differentiated tissues. The polypeptide is Frizzled-7 (FZD7) (Gallus gallus (Chicken)).